The chain runs to 398 residues: Glucose-1-phosphate adenylyltransferase (398 aa).

Alpha-D-glucose 1-phosphate is bound by residues Tyr-100, Gly-165, 180–181 (EK), and Ser-191.

Belongs to the bacterial/plant glucose-1-phosphate adenylyltransferase family. Homotetramer.

It carries out the reaction alpha-D-glucose 1-phosphate + ATP + H(+) = ADP-alpha-D-glucose + diphosphate. Its pathway is glycan biosynthesis; glycogen biosynthesis. Functionally, involved in the biosynthesis of ADP-glucose, a building block required for the elongation reactions to produce glycogen. Catalyzes the reaction between ATP and alpha-D-glucose 1-phosphate (G1P) to produce pyrophosphate and ADP-Glc. The sequence is that of Glucose-1-phosphate adenylyltransferase from Desulfitobacterium hafniense (strain DSM 10664 / DCB-2).